The following is a 366-amino-acid chain: Beta sliding clamp (366 aa).

The i stretch occupies residues 1 to 125 (MKFTVEREHL…FPNLDDWQSE (125 aa)). Positions 126-253 (VEFTLPQATM…YRRVLPKNPD (128 aa)) are II. The tract at residues 254 to 366 (KHLEAGCDLL…AAYVVMPMRL (113 aa)) is III.

It belongs to the beta sliding clamp family. As to quaternary structure, forms a ring-shaped head-to-tail homodimer around DNA which binds and tethers DNA polymerases and other proteins to the DNA. The DNA replisome complex has a single clamp-loading complex (3 tau and 1 each of delta, delta', psi and chi subunits) which binds 3 Pol III cores (1 core on the leading strand and 2 on the lagging strand) each with a beta sliding clamp dimer. Additional proteins in the replisome are other copies of gamma, psi and chi, Ssb, DNA helicase and RNA primase.

The protein localises to the cytoplasm. Its function is as follows. Confers DNA tethering and processivity to DNA polymerases and other proteins. Acts as a clamp, forming a ring around DNA (a reaction catalyzed by the clamp-loading complex) which diffuses in an ATP-independent manner freely and bidirectionally along dsDNA. Initially characterized for its ability to contact the catalytic subunit of DNA polymerase III (Pol III), a complex, multichain enzyme responsible for most of the replicative synthesis in bacteria; Pol III exhibits 3'-5' exonuclease proofreading activity. The beta chain is required for initiation of replication as well as for processivity of DNA replication. The sequence is that of Beta sliding clamp (dnaN) from Escherichia coli O157:H7.